A 396-amino-acid chain; its full sequence is Probable sugar efflux transporter (396 aa).

12 helical membrane-spanning segments follow: residues 15 to 35, 50 to 70, 81 to 101, 103 to 123, 136 to 156, 169 to 189, 209 to 229, 246 to 266, 275 to 295, 301 to 321, 333 to 353, and 364 to 384; these read VVTL…PVGL, VGIM…PFML, LICL…AWNF, VLVI…SITA, AQAL…GLPI, TFFA…KLLP, PALM…YTAY, FATV…LVFG, LLVS…LPAA, LALL…GMQV, VAMA…ALAG, and TIGY…VLIF.

Belongs to the major facilitator superfamily. SotB (TC 2.A.1.2) family.

The protein resides in the cell inner membrane. Functionally, involved in the efflux of sugars. The physiological role may be the reduction of the intracellular concentration of toxic sugars or sugar metabolites. The sequence is that of Probable sugar efflux transporter from Salmonella arizonae (strain ATCC BAA-731 / CDC346-86 / RSK2980).